Here is a 339-residue protein sequence, read N- to C-terminus: Protein-arginine kinase (339 aa).

A Phosphagen kinase C-terminal domain is found at 14 to 242; it reads IVINSNISLS…LNVISEEKKF (229 aa). Residues 17–21, 164–168, and 195–200 each bind ATP; these read NSNIS, RASVN, and KGLYEE.

This sequence belongs to the ATP:guanido phosphotransferase family.

The enzyme catalyses L-arginyl-[protein] + ATP = N(omega)-phospho-L-arginyl-[protein] + ADP + H(+). Functionally, catalyzes the specific phosphorylation of arginine residues in proteins. This Clostridium botulinum (strain Eklund 17B / Type B) protein is Protein-arginine kinase.